The sequence spans 161 residues: Cyclic pyranopterin monophosphate synthase (161 aa).

Substrate is bound by residues 75–77 (LCH) and 113–114 (ME). The active site involves Asp128.

This sequence belongs to the MoaC family. In terms of assembly, homohexamer; trimer of dimers.

The catalysed reaction is (8S)-3',8-cyclo-7,8-dihydroguanosine 5'-triphosphate = cyclic pyranopterin phosphate + diphosphate. Its pathway is cofactor biosynthesis; molybdopterin biosynthesis. Functionally, catalyzes the conversion of (8S)-3',8-cyclo-7,8-dihydroguanosine 5'-triphosphate to cyclic pyranopterin monophosphate (cPMP). This Escherichia coli O9:H4 (strain HS) protein is Cyclic pyranopterin monophosphate synthase.